We begin with the raw amino-acid sequence, 388 residues long: Succinate--CoA ligase [ADP-forming] subunit beta (388 aa).

The ATP-grasp domain maps to 9–244; that stretch reads KQLFAEYGLP…PSQDDAREAH (236 aa). ATP is bound by residues Lys-46, 53–55, Glu-99, Thr-102, and Glu-107; that span reads GRG. Residues Asn-199 and Asp-213 each contribute to the Mg(2+) site. Substrate contacts are provided by residues Asn-264 and 321–323; that span reads GIV.

Belongs to the succinate/malate CoA ligase beta subunit family. Heterotetramer of two alpha and two beta subunits. Mg(2+) is required as a cofactor.

The catalysed reaction is succinate + ATP + CoA = succinyl-CoA + ADP + phosphate. The enzyme catalyses GTP + succinate + CoA = succinyl-CoA + GDP + phosphate. Its pathway is carbohydrate metabolism; tricarboxylic acid cycle; succinate from succinyl-CoA (ligase route): step 1/1. Its function is as follows. Succinyl-CoA synthetase functions in the citric acid cycle (TCA), coupling the hydrolysis of succinyl-CoA to the synthesis of either ATP or GTP and thus represents the only step of substrate-level phosphorylation in the TCA. The beta subunit provides nucleotide specificity of the enzyme and binds the substrate succinate, while the binding sites for coenzyme A and phosphate are found in the alpha subunit. The sequence is that of Succinate--CoA ligase [ADP-forming] subunit beta from Pseudomonas putida (strain ATCC 700007 / DSM 6899 / JCM 31910 / BCRC 17059 / LMG 24140 / F1).